Reading from the N-terminus, the 177-residue chain is Large ribosomal subunit protein uL6 (177 aa).

This sequence belongs to the universal ribosomal protein uL6 family. As to quaternary structure, part of the 50S ribosomal subunit.

This protein binds to the 23S rRNA, and is important in its secondary structure. It is located near the subunit interface in the base of the L7/L12 stalk, and near the tRNA binding site of the peptidyltransferase center. The polypeptide is Large ribosomal subunit protein uL6 (Colwellia psychrerythraea (strain 34H / ATCC BAA-681) (Vibrio psychroerythus)).